A 1091-amino-acid polypeptide reads, in one-letter code: Ubiquitin carboxyl-terminal hydrolase 36 (1091 aa).

Residues 115-152 (ANGHDNNGRKLSDHPNQNHNHANPNGHHANPNELPKPK) form a disordered region. The span at 128–146 (HPNQNHNHANPNGHHANPN) shows a compositional bias: low complexity. The USP domain maps to 176–484 (SGMINAGNTC…NAYIMFYELD (309 aa)). The active-site Nucleophile is the cysteine 185. Histidine 443 (proton acceptor) is an active-site residue. A phosphoserine mark is found at serine 518 and serine 522. 4 disordered regions span residues 523–572 (PAKF…KSPL), 594–892 (PTAN…ELLK), 972–1007 (QRDLADDEENEMDRGRQRKVKSGSAKISNSTPGYNP), and 1068–1091 (LAAGGGFTRRQPTHSAQQQQQQQS). The segment covering 547–572 (TTIQFKPQHQPSHQQNGVQQSAKSPL) has biased composition (polar residues). The span at 594–612 (PTANGNKSSSNHSNHKSVN) shows a compositional bias: low complexity. Residues 643–652 (KMDDCMDSGK) are compositionally biased toward basic and acidic residues. The span at 653–667 (PKSPVKTPVKTPLKS) shows a compositional bias: low complexity. 2 positions are modified to phosphothreonine: threonine 659 and threonine 663. A phosphoserine mark is found at serine 673 and serine 675. Residues 691 to 702 (RSSDSSDSEHEP) show a composition bias toward basic and acidic residues. Over residues 703 to 727 (TTSSVQLNGHSKTNGSLSNGSSKST) the composition is skewed to polar residues. Serine 749 bears the Phosphoserine mark. The segment covering 749–759 (SEDDDDDEDEP) has biased composition (acidic residues). Low complexity predominate over residues 769-780 (PQKQSQSQSRSG). Residues 781–790 (PPSPKTPPSP) show a composition bias toward pro residues. A Phosphoserine modification is found at serine 783. A Phosphothreonine modification is found at threonine 786. Position 789 is a phosphoserine (serine 789). Residues 806–821 (DGDDDEDDDDDDDEVV) show a composition bias toward acidic residues. Position 829 is a phosphothreonine (threonine 829). Polar residues-rich tracts occupy residues 838 to 850 (FASSKTATDSPTT) and 863 to 886 (AIKTQQQPRAGNGYQSEATANGGT). Position 847 is a phosphoserine (serine 847). Residue threonine 850 is modified to Phosphothreonine.

The protein belongs to the peptidase C19 family. In terms of assembly, interacts with atms/PAF1, but not with CycT.

It is found in the nucleus. The protein resides in the nucleolus. The enzyme catalyses Thiol-dependent hydrolysis of ester, thioester, amide, peptide and isopeptide bonds formed by the C-terminal Gly of ubiquitin (a 76-residue protein attached to proteins as an intracellular targeting signal).. In terms of biological role, required for maintaining multiple types of adult stem cells, including male and female germline, epithelial follicle cell and intestinal stem cells. May function as a transcriptional repressor by continually deubiquiting histone H2B at the promoters of genes critical for cellular differentiation, thereby preventing histone H3 'Lys-4' trimethylation (H3K4). Controls selective autophagy activation by ubiquitinated proteins. The protein is Ubiquitin carboxyl-terminal hydrolase 36 (Usp36) of Drosophila ananassae (Fruit fly).